Here is a 344-residue protein sequence, read N- to C-terminus: MYPLLFRTVLSRMDPEDAHHLASTAIALLPSSGFGWIARRLTAPDPSLAVDALGLRFPSPFGVAAGFDKDAQAVLGLGQLGFGHVEVGTVTAEAQPGNPRPRLFRLIEDRAVINRMGFNNGGAAALADRLRRLRSRRDRPVIGVNIGKTRAVAVDDAVADYVRSARLVAPVADYLAVNVSSPNTPGLRGLQEIELLRPLLTSIRDAADGVPVLVKIAPDLQDAEVERIAELATELGLAGVIATNTTLSRADLRTDAAVVEAAGAGGLSGSPLAPRALEVLRILRRALPAESCVISVGGVETAEDVQARLDAGATLVQGYTAFLYRGPLWARSVNAGLVRIRRTR.

Residues 65–69 (AGFDK) and Thr-89 each bind FMN. Lys-69 is a binding site for substrate. 114–118 (NRMGF) contributes to the substrate binding site. Residues Asn-145 and Asn-178 each contribute to the FMN site. Position 178 (Asn-178) interacts with substrate. The Nucleophile role is filled by Ser-181. Asn-183 is a binding site for substrate. FMN contacts are provided by Lys-215 and Thr-243. Residue 244–245 (NT) coordinates substrate. Residues Gly-269, Gly-298, and 319 to 320 (YT) each bind FMN.

The protein belongs to the dihydroorotate dehydrogenase family. Type 2 subfamily. Monomer. The cofactor is FMN.

Its subcellular location is the cell membrane. The enzyme catalyses (S)-dihydroorotate + a quinone = orotate + a quinol. It participates in pyrimidine metabolism; UMP biosynthesis via de novo pathway; orotate from (S)-dihydroorotate (quinone route): step 1/1. Catalyzes the conversion of dihydroorotate to orotate with quinone as electron acceptor. The protein is Dihydroorotate dehydrogenase (quinone) of Clavibacter michiganensis subsp. michiganensis (strain NCPPB 382).